Consider the following 239-residue polypeptide: Ribonuclease 3 (239 aa).

One can recognise an RNase III domain in the interval 11 to 133 (HTAIQKKLGY…MFAAVSFDAD (123 aa)). Glu46 lines the Mg(2+) pocket. Asp50 is a catalytic residue. Residues Asp119 and Glu122 each contribute to the Mg(2+) site. Residue Glu122 is part of the active site. The DRBM domain maps to 160–230 (DGKTALQEAL…AKEALKWLEE (71 aa)).

The protein belongs to the ribonuclease III family. Homodimer. The cofactor is Mg(2+).

The protein resides in the cytoplasm. It catalyses the reaction Endonucleolytic cleavage to 5'-phosphomonoester.. Its function is as follows. Digests double-stranded RNA. Involved in the processing of primary rRNA transcript to yield the immediate precursors to the large and small rRNAs (23S and 16S). Processes some mRNAs, and tRNAs when they are encoded in the rRNA operon. Processes pre-crRNA and tracrRNA of type II CRISPR loci if present in the organism. In Neisseria gonorrhoeae (strain ATCC 700825 / FA 1090), this protein is Ribonuclease 3.